The following is a 512-amino-acid chain: 2,3-bisphosphoglycerate-independent phosphoglycerate mutase (512 aa).

Aspartate 12 and serine 62 together coordinate Mn(2+). Serine 62 (phosphoserine intermediate) is an active-site residue. Residues histidine 123, 153-154 (RD), arginine 185, arginine 191, 260-263 (RPDR), and lysine 333 contribute to the substrate site. 5 residues coordinate Mn(2+): aspartate 400, histidine 404, aspartate 441, histidine 442, and histidine 460.

Belongs to the BPG-independent phosphoglycerate mutase family. In terms of assembly, monomer. It depends on Mn(2+) as a cofactor.

It catalyses the reaction (2R)-2-phosphoglycerate = (2R)-3-phosphoglycerate. It participates in carbohydrate degradation; glycolysis; pyruvate from D-glyceraldehyde 3-phosphate: step 3/5. Functionally, catalyzes the interconversion of 2-phosphoglycerate and 3-phosphoglycerate. The chain is 2,3-bisphosphoglycerate-independent phosphoglycerate mutase from Clostridium beijerinckii (strain ATCC 51743 / NCIMB 8052) (Clostridium acetobutylicum).